A 542-amino-acid chain; its full sequence is Beta-fructofuranosidase, insoluble isoenzyme 5 (542 aa).

Residues 50-53 (WQND), Gln-69, Trp-77, and 114-115 (WS) each bind substrate. The active site involves Asp-53. N-linked (GlcNAc...) asparagine glycosylation occurs at Asn-142. Residues 178–179 (RD) and Glu-233 each bind substrate. A disulfide bond links Cys-389 and Cys-436. 2 N-linked (GlcNAc...) asparagine glycosylation sites follow: Asn-510 and Asn-516.

This sequence belongs to the glycosyl hydrolase 32 family. As to expression, expressed in roots and leaves.

The protein resides in the secreted. It is found in the extracellular space. Its subcellular location is the apoplast. The protein localises to the cell wall. The catalysed reaction is Hydrolysis of terminal non-reducing beta-D-fructofuranoside residues in beta-D-fructofuranosides.. Functionally, may play a role in stress response. The protein is Beta-fructofuranosidase, insoluble isoenzyme 5 (CIN5) of Oryza sativa subsp. japonica (Rice).